The sequence spans 461 residues: UPF0210 protein LCABL_10110 (461 aa).

The protein belongs to the UPF0210 family. In terms of assembly, homodimer.

This Lacticaseibacillus casei (strain BL23) (Lactobacillus casei) protein is UPF0210 protein LCABL_10110.